The sequence spans 188 residues: Translation machinery-associated protein 22 (188 aa).

The SUI1 domain maps to 96-167; that stretch reads VTIKRIERNK…EIEEFLLEKY (72 aa).

This sequence belongs to the DENR family. Interacts with the 40S ribosomal subunit.

Its subcellular location is the cytoplasm. This Chaetomium globosum (strain ATCC 6205 / CBS 148.51 / DSM 1962 / NBRC 6347 / NRRL 1970) (Soil fungus) protein is Translation machinery-associated protein 22 (TMA22).